A 299-amino-acid chain; its full sequence is Homoserine kinase (299 aa).

Position 88–98 (88–98 (PLGRGLGSSAT)) interacts with ATP.

It belongs to the GHMP kinase family. Homoserine kinase subfamily.

Its subcellular location is the cytoplasm. It carries out the reaction L-homoserine + ATP = O-phospho-L-homoserine + ADP + H(+). The protein operates within amino-acid biosynthesis; L-threonine biosynthesis; L-threonine from L-aspartate: step 4/5. Functionally, catalyzes the ATP-dependent phosphorylation of L-homoserine to L-homoserine phosphate. The chain is Homoserine kinase from Gloeobacter violaceus (strain ATCC 29082 / PCC 7421).